Reading from the N-terminus, the 252-residue chain is 5-oxoprolinase subunit A (252 aa).

It belongs to the LamB/PxpA family. Forms a complex composed of PxpA, PxpB and PxpC.

The catalysed reaction is 5-oxo-L-proline + ATP + 2 H2O = L-glutamate + ADP + phosphate + H(+). Catalyzes the cleavage of 5-oxoproline to form L-glutamate coupled to the hydrolysis of ATP to ADP and inorganic phosphate. This is 5-oxoprolinase subunit A from Mycobacterium avium (strain 104).